Here is a 254-residue protein sequence, read N- to C-terminus: Cytochrome c oxidase subunit 2 (254 aa).

The Mitochondrial intermembrane segment spans residues 1 to 37 (MNNILNFYPAVITTDVAENWQIGFQDPATPIMEGIIN). A helical membrane pass occupies residues 38–58 (LHYDLMFFICVISVFVSWMLG). The Mitochondrial matrix segment spans residues 59 to 83 (RTLWHFEQNQNKIPSSLTHGTLIEM). The chain crosses the membrane as a helical span at residues 84–104 (IWTVTPAFILLIIAVPSFSLL). Over 105 to 254 (YAMDEIISPA…VSWISNKLNE (150 aa)) the chain is Mitochondrial intermembrane. Positions 186, 221, 223, 225, 229, and 232 each coordinate Cu cation. Residue glutamate 223 participates in Mg(2+) binding.

The protein belongs to the cytochrome c oxidase subunit 2 family. In terms of assembly, component of the cytochrome c oxidase (complex IV, CIV), a multisubunit enzyme composed of a catalytic core of 3 subunits and several supernumerary subunits. The complex exists as a monomer or a dimer and forms supercomplexes (SCs) in the inner mitochondrial membrane with ubiquinol-cytochrome c oxidoreductase (cytochrome b-c1 complex, complex III, CIII). The cofactor is Cu cation.

It is found in the mitochondrion inner membrane. The enzyme catalyses 4 Fe(II)-[cytochrome c] + O2 + 8 H(+)(in) = 4 Fe(III)-[cytochrome c] + 2 H2O + 4 H(+)(out). Its function is as follows. Component of the cytochrome c oxidase, the last enzyme in the mitochondrial electron transport chain which drives oxidative phosphorylation. The respiratory chain contains 3 multisubunit complexes succinate dehydrogenase (complex II, CII), ubiquinol-cytochrome c oxidoreductase (cytochrome b-c1 complex, complex III, CIII) and cytochrome c oxidase (complex IV, CIV), that cooperate to transfer electrons derived from NADH and succinate to molecular oxygen, creating an electrochemical gradient over the inner membrane that drives transmembrane transport and the ATP synthase. Cytochrome c oxidase is the component of the respiratory chain that catalyzes the reduction of oxygen to water. Electrons originating from reduced cytochrome c in the intermembrane space (IMS) are transferred via the dinuclear copper A center (CU(A)) of subunit 2 and heme A of subunit 1 to the active site in subunit 1, a binuclear center (BNC) formed by heme A3 and copper B (CU(B)). The BNC reduces molecular oxygen to 2 water molecules using 4 electrons from cytochrome c in the IMS and 4 protons from the mitochondrial matrix. The chain is Cytochrome c oxidase subunit 2 (COX2) from Chondrus crispus (Carrageen Irish moss).